The chain runs to 337 residues: MHSLPVNLVLTVLTVFLTSPAQVIGYRPYPPKTNGSDQIFDASKKFEGSSNLVRLRYHMGPVLTNNITVHPIWYGTWQKSQKKIIREFINSISAVGSKHPSVSGWWKTVQLYTDQTGSNITGTVRLGEEKNDRFYSHGKSLTRLSIQSVIKSAVTSRSRPLPVNPKSGLYLLLTADDVYVQDFCGQVCGFHYFTFPSIVGFTLPYAWVGNSAKLCPGVCAYPFAVPAFIPGLKPVKSPNGDVGVDGMISVIAHEIAELATNPLVNAWYAGPDPVAPVEIADLCEGIYGTGGGGSYTGQMLNDHSGATYNVNGIRRRYLIQWLWSHVVSYCTGPNALD.

The N-terminal stretch at 1–25 is a signal peptide; that stretch reads MHSLPVNLVLTVLTVFLTSPAQVIG. N-linked (GlcNAc...) asparagine glycans are attached at residues asparagine 34, asparagine 66, and asparagine 119.

This sequence belongs to the EXORDIUM family.

It localises to the secreted. Its subcellular location is the extracellular space. The protein localises to the apoplast. May play a role in a brassinosteroid-dependent regulation of growth and development. The chain is Protein EXORDIUM-like 3 (EXL3) from Arabidopsis thaliana (Mouse-ear cress).